The primary structure comprises 488 residues: MGLVKEGADMEEGTLEIGMEYRTVSGVAGPLVILDKVKGPKYQEIVNIRLGDGTTRRGQVLEVDGEKAVVQVFEGTSGIDNKYTTVQFTGEVLKTPVSLDMLGRIFNGSGKPIDNGPPILPEAYLDISGSSINPSERTYPEEMIQTGISTIDVMNSIARGQKIPLFSAAGLPHNEIAAQICRQAGLVKRLEKGKHAEGGGEDDNFAIVFAAMGVNMETAQFFKRDFEENGSMERVTLFLNLANDPTIERIITPRIALTTAEYLAYECGKHVLVILTDMSSYADALREVSAAREEVPGRRGYPGYMYTDLATIYERAGRIEGRTGSITQIPILTMPNDDITHPTPDLTGYITEGQIYIDRQLHNRQIYPPINVLPSLSRLMKSAIGEGMTRRDHSDVSNQLYANYAIGKDVQAMKAVVGEEALSSEDLLYLEFLDKFERKFVAQGAYDTRNIFQSLDLAWTLLRIFPRELLHRIPAKTLDAFYSRDAAH.

The protein belongs to the ATPase alpha/beta chains family. In terms of assembly, V-ATPase is a heteromultimeric enzyme composed of a peripheral catalytic V1 complex (main components: subunits A, B, C, D, E, and F) attached to an integral membrane V0 proton pore complex (main component: the proteolipid protein).

Non-catalytic subunit of the peripheral V1 complex of vacuolar ATPase. V-ATPase is responsible for acidifying a variety of intracellular compartments in eukaryotic cells. The protein is V-type proton ATPase subunit B 1 of Hordeum vulgare (Barley).